Reading from the N-terminus, the 258-residue chain is Development-specific 25 kDa protein (258 aa).

10–34 (VYVGGFSGFGYQVCQMMMKKPMKHL) provides a ligand contact to NAD(+). Ser-138 contributes to the substrate binding site. Catalysis depends on Tyr-151, which acts as the Proton acceptor.

It belongs to the short-chain dehydrogenases/reductases (SDR) family.

This is Development-specific 25 kDa protein from Sarcophaga peregrina (Flesh fly).